We begin with the raw amino-acid sequence, 572 residues long: DNA mismatch repair protein MutL (572 aa).

Belongs to the DNA mismatch repair MutL/HexB family.

Functionally, this protein is involved in the repair of mismatches in DNA. It is required for dam-dependent methyl-directed DNA mismatch repair. May act as a 'molecular matchmaker', a protein that promotes the formation of a stable complex between two or more DNA-binding proteins in an ATP-dependent manner without itself being part of a final effector complex. The polypeptide is DNA mismatch repair protein MutL (Dictyoglomus turgidum (strain DSM 6724 / Z-1310)).